Consider the following 482-residue polypeptide: MKNILKKNEVNFLFYDYETFGIHTSLDKPAQFSSIRTDKNFNIMEEPKCFYCFPSDDYLPDPSSILITGITPEYTEKHGFNEYKFSKKIHDVLLKPNTCIIGYNNINFDDEITRNIFYRNFLDPYEWSWKNNNSRWDLLNVVRACYALRPSGIQWPKNEFGLPVFKLSDLTQKNNISHYNAHDATSDVYATIELAKLIKRKQPKLFDFFFKYRKKNELCRLIDIEKFTPIIYVSSYFGALRQNMSCILPLSWDLHNKNILISIDLFKDIDKLIVFCKTVSISNISIKDLFDLGIVLVYLNRCPILAPIKVIRKEDTNRLNFKKYFYYKKINLVKKNYFLIDLVKNVLLKKNENKNSLNVDLQIYDSFFNFHDKNLIKKISLTKSSDLKKMKLDFKDPRLKELFFRYKARNFFNILKNDEKKEWINYCLKTLNSFFLTGYIDKIESLLKIYSYDVKKNNLLSDLLKYVFKKYKKVFYKNINLS.

The Exonuclease domain occupies 13–194 (LFYDYETFGI…TSDVYATIEL (182 aa)). The Mg(2+) site is built by D16, E18, and D187. E18 provides a ligand contact to substrate. One can recognise an ExoI SH3-like domain in the interval 203–351 (PKLFDFFFKY…LVKNVLLKKN (149 aa)). Residues 355-471 (NSLNVDLQIY…DLLKYVFKKY (117 aa)) enclose the ExoI C-terminal domain.

Monomer. Interacts with ssb (via C-terminus); this interaction stimulates the exonuclease activity by recruiting the enzyme to its substrate. Mg(2+) serves as cofactor.

The catalysed reaction is Exonucleolytic cleavage in the 3'- to 5'-direction to yield nucleoside 5'-phosphates.. In terms of biological role, degrades single-stranded DNA (ssDNA) in a highly processive manner. Also functions as a DNA deoxyribophosphodiesterase that releases deoxyribose-phosphate moieties following the cleavage of DNA at an apurinic/apyrimidinic (AP) site by either an AP endonuclease or AP lyase. This is Exodeoxyribonuclease I (sbcB) from Buchnera aphidicola subsp. Schizaphis graminum (strain Sg).